Consider the following 97-residue polypeptide: UPF0298 protein MGAS9429_Spy0329 (97 aa).

It belongs to the UPF0298 family.

It is found in the cytoplasm. The protein is UPF0298 protein MGAS9429_Spy0329 of Streptococcus pyogenes serotype M12 (strain MGAS9429).